A 2371-amino-acid chain; its full sequence is NBAS subunit of NRZ tethering complex (2371 aa).

The segment at 1 to 1035 (MAAPESGPAL…KTEATTKLHD (1035 aa)) is interaction with USE1. 2 WD repeats span residues 130 to 169 (DPKP…LFVI) and 316 to 355 (QEQD…QQGE). Phosphoserine occurs at positions 473 and 475. The tract at residues 1036–2371 (MVDQLEQILS…TALRAAQHWV (1336 aa)) is interaction with ZW10 and RINT1. Position 1057 is an N6-acetyllysine (Lys1057).

Component of the NRZ complex composed of NBAS, ZW10 and RINT1/TIP20L; NRZ associates with SNAREs STX18, USE1, BNIP1/SEC20L and SEC22B (the assembly has been described as syntaxin 18 complex); links NRZ to SNARE USE1. Broadly expressed, with highest levels in heart and skeletal muscle, and lowest levels in liver, small intestine and thymus. Well expressed in retinal ganglion cells, epidermal skin cells, and leukocytes. Up-regulated together with N-myc in some neuroblastoma cell lines.

It is found in the cytoplasm. The protein localises to the endoplasmic reticulum. Its subcellular location is the endoplasmic reticulum membrane. Involved in Golgi-to-endoplasmic reticulum (ER) retrograde transport; the function is proposed to depend on its association in the NRZ complex which is believed to play a role in SNARE assembly at the ER. Required for normal embryonic development. May play a role in the nonsense-mediated decay pathway of mRNAs containing premature stop codons. This chain is NBAS subunit of NRZ tethering complex, found in Homo sapiens (Human).